The sequence spans 389 residues: Lipid-A-disaccharide synthase (389 aa).

The protein belongs to the LpxB family.

The catalysed reaction is a lipid X + a UDP-2-N,3-O-bis[(3R)-3-hydroxyacyl]-alpha-D-glucosamine = a lipid A disaccharide + UDP + H(+). The protein operates within bacterial outer membrane biogenesis; LPS lipid A biosynthesis. Condensation of UDP-2,3-diacylglucosamine and 2,3-diacylglucosamine-1-phosphate to form lipid A disaccharide, a precursor of lipid A, a phosphorylated glycolipid that anchors the lipopolysaccharide to the outer membrane of the cell. In Verminephrobacter eiseniae (strain EF01-2), this protein is Lipid-A-disaccharide synthase.